A 146-amino-acid chain; its full sequence is VEWSASERSTITSLWGKINVAEIGPQALARVLIVYPWTQRYFGKFGDLSNAAAIQGNAKVAAHGKVVLGALEKAVKNMDDVKGTYSKLSQLHNEKLNVDPDNFRLLGDCLTIVLATKLGAGFPAEIQAVWQKFVAVVVSALSKQYF.

A Globin domain is found at 2–146; that stretch reads EWSASERSTI…VVSALSKQYF (145 aa). Positions 63 and 92 each coordinate heme b.

The protein belongs to the globin family. Heterotetramer of two alpha chains and two beta chains. Red blood cells.

Functionally, involved in oxygen transport from gills to the various peripheral tissues. The sequence is that of Hemoglobin cathodic subunit beta (hbb2) from Anguilla anguilla (European freshwater eel).